A 130-amino-acid chain; its full sequence is Annexin A1 (130 aa).

Gln19 is covalently cross-linked (Isoglutamyl lysine isopeptide (Gln-Lys) (interchain with K-?)). Phosphoserine; by PKC is present on Ser24. Annexin repeat units follow at residues 37–108 and 109–130; these read FDPS…ALLK and TPAQ…TDRR. Residues Gly54, Val55, Glu57, Lys92, Leu95, Glu100, Met122, Gly124, Gly126, Thr127, and Arg130 each contribute to the Ca(2+) site.

The protein belongs to the annexin family.

Its subcellular location is the nucleus. The protein resides in the cytoplasm. It is found in the cell projection. The protein localises to the cilium. It localises to the basolateral cell membrane. Its subcellular location is the lateral cell membrane. The protein resides in the cell membrane. It is found in the apical cell membrane. The protein localises to the membrane. It localises to the early endosome. Its subcellular location is the cytoplasmic vesicle membrane. The protein resides in the endosome membrane. It is found in the secreted. The protein localises to the extracellular space. It localises to the extracellular exosome. Its subcellular location is the cytoplasmic vesicle. The protein resides in the secretory vesicle lumen. It is found in the phagocytic cup. Functionally, plays important roles in the innate immune response as effector of glucocorticoid-mediated responses and regulator of the inflammatory process. Has anti-inflammatory activity. Plays a role in glucocorticoid-mediated down-regulation of the early phase of the inflammatory response. Promotes resolution of inflammation and wound healing. Functions at least in part by activating the formyl peptide receptors and downstream signaling cascades. Promotes chemotaxis of granulocytes and monocytes via activation of the formyl peptide receptors. Contributes to the adaptive immune response by enhancing signaling cascades that are triggered by T-cell activation, regulates differentiation and proliferation of activated T-cells. Promotes the differentiation of T-cells into Th1 cells and negatively regulates differentiation into Th2 cells. Has no effect on unstimulated T-cells. Promotes rearrangement of the actin cytoskeleton, cell polarization and cell migration. Negatively regulates hormone exocytosis via activation of the formyl peptide receptors and reorganization of the actin cytoskeleton. Has high affinity for Ca(2+) and can bind up to eight Ca(2+) ions. Displays Ca(2+)-dependent binding to phospholipid membranes. Plays a role in the formation of phagocytic cups and phagosomes. Plays a role in phagocytosis by mediating the Ca(2+)-dependent interaction between phagosomes and the actin cytoskeleton. The chain is Annexin A1 (ANXA1) from Gallus gallus (Chicken).